The sequence spans 196 residues: MPIGVPKVPFRNPGEDDISWIDVYNRLYRERLLFLGQEVESEISNQLIGLMIYLSIEDENKDLYFFINSPGGWVLPGIAIYDTMQFVPPEVHTICLGLAASMGSFILVGGTITKRLAFPHARVMIHQPAAAFYEAQAGEFVMEAEELLKLREIITKVYVQRTGKPLWVVSEDLERDVFMSATEAQTHGIVDLVAVQ.

Ser101 (nucleophile) is an active-site residue. The active site involves His126.

Belongs to the peptidase S14 family. As to quaternary structure, component of the chloroplastic Clp protease core complex.

Its subcellular location is the plastid. The protein resides in the chloroplast stroma. It carries out the reaction Hydrolysis of proteins to small peptides in the presence of ATP and magnesium. alpha-casein is the usual test substrate. In the absence of ATP, only oligopeptides shorter than five residues are hydrolyzed (such as succinyl-Leu-Tyr-|-NHMec, and Leu-Tyr-Leu-|-Tyr-Trp, in which cleavage of the -Tyr-|-Leu- and -Tyr-|-Trp bonds also occurs).. Cleaves peptides in various proteins in a process that requires ATP hydrolysis. Has a chymotrypsin-like activity. Plays a major role in the degradation of misfolded proteins. The protein is ATP-dependent Clp protease proteolytic subunit of Vitis vinifera (Grape).